The following is a 1510-amino-acid chain: Chromosome partition protein MukB (1510 aa).

ATP is bound at residue 75–82 (GGNGAGKS). Residues 346–706 (QHRLVDLSRE…LDEQISRLSQ (361 aa)) adopt a coiled-coil conformation. The flexible hinge stretch occupies residues 707–824 (PDGSEDPRLN…EIPLFGCAAR (118 aa)). Coiled coils occupy residues 825–1154 (EKRL…AAKV) and 1248–1304 (IDAI…LQNI).

It belongs to the SMC family. MukB subfamily. As to quaternary structure, homodimerization via its hinge domain. Binds to DNA via its C-terminal region. Interacts, and probably forms a ternary complex, with MukE and MukF via its C-terminal region. The complex formation is stimulated by calcium or magnesium. Interacts with tubulin-related protein FtsZ.

The protein localises to the cytoplasm. It localises to the nucleoid. Its function is as follows. Plays a central role in chromosome condensation, segregation and cell cycle progression. Functions as a homodimer, which is essential for chromosome partition. Involved in negative DNA supercoiling in vivo, and by this means organize and compact chromosomes. May achieve or facilitate chromosome segregation by condensation DNA from both sides of a centrally located replisome during cell division. This chain is Chromosome partition protein MukB, found in Haemophilus influenzae (strain ATCC 51907 / DSM 11121 / KW20 / Rd).